We begin with the raw amino-acid sequence, 189 residues long: Potassium-transporting ATPase KdpC subunit (189 aa).

The chain crosses the membrane as a helical span at residues 6–26 (PAILFFIVFTILCGGVYPAVV).

It belongs to the KdpC family. The system is composed of three essential subunits: KdpA, KdpB and KdpC.

It is found in the cell inner membrane. Part of the high-affinity ATP-driven potassium transport (or Kdp) system, which catalyzes the hydrolysis of ATP coupled with the electrogenic transport of potassium into the cytoplasm. This subunit acts as a catalytic chaperone that increases the ATP-binding affinity of the ATP-hydrolyzing subunit KdpB by the formation of a transient KdpB/KdpC/ATP ternary complex. In Geotalea uraniireducens (strain Rf4) (Geobacter uraniireducens), this protein is Potassium-transporting ATPase KdpC subunit.